The following is a 463-amino-acid chain: UDP-N-acetylmuramate--L-alanine ligase (463 aa).

Gly112–Thr118 contacts ATP.

This sequence belongs to the MurCDEF family.

Its subcellular location is the cytoplasm. The catalysed reaction is UDP-N-acetyl-alpha-D-muramate + L-alanine + ATP = UDP-N-acetyl-alpha-D-muramoyl-L-alanine + ADP + phosphate + H(+). It participates in cell wall biogenesis; peptidoglycan biosynthesis. Its function is as follows. Cell wall formation. This Thiobacillus denitrificans (strain ATCC 25259 / T1) protein is UDP-N-acetylmuramate--L-alanine ligase.